Consider the following 329-residue polypeptide: Methionyl-tRNA formyltransferase (329 aa).

117-120 contacts (6S)-5,6,7,8-tetrahydrofolate; it reads SLLP.

This sequence belongs to the Fmt family.

It catalyses the reaction L-methionyl-tRNA(fMet) + (6R)-10-formyltetrahydrofolate = N-formyl-L-methionyl-tRNA(fMet) + (6S)-5,6,7,8-tetrahydrofolate + H(+). Its function is as follows. Attaches a formyl group to the free amino group of methionyl-tRNA(fMet). The formyl group appears to play a dual role in the initiator identity of N-formylmethionyl-tRNA by promoting its recognition by IF2 and preventing the misappropriation of this tRNA by the elongation apparatus. This is Methionyl-tRNA formyltransferase from Paracidovorax citrulli (strain AAC00-1) (Acidovorax citrulli).